The following is a 194-amino-acid chain: MSEIKLIVGLGNPGDKYADTRHNAGEWLIERLARRFNFNLSVESKFSGKTARAVISGQEMRFLVPTTFMNLSGKAVSALANFYRIPPEQILVLHDELDLPPGIAKLKQGGGHGGHNGLKDIIAQLANNKNFYRLRIGIGHPGDKNLVASYVLNKPSPTDWQLIDRTLDEATDCIEILMKEGITKATNRLNAFKA.

Tyrosine 17 is a binding site for tRNA. Histidine 22 serves as the catalytic Proton acceptor. TRNA-binding residues include phenylalanine 68, asparagine 70, and asparagine 116.

This sequence belongs to the PTH family. In terms of assembly, monomer.

The protein localises to the cytoplasm. It carries out the reaction an N-acyl-L-alpha-aminoacyl-tRNA + H2O = an N-acyl-L-amino acid + a tRNA + H(+). In terms of biological role, hydrolyzes ribosome-free peptidyl-tRNAs (with 1 or more amino acids incorporated), which drop off the ribosome during protein synthesis, or as a result of ribosome stalling. Catalyzes the release of premature peptidyl moieties from peptidyl-tRNA molecules trapped in stalled 50S ribosomal subunits, and thus maintains levels of free tRNAs and 50S ribosomes. The chain is Peptidyl-tRNA hydrolase from Histophilus somni (strain 2336) (Haemophilus somnus).